We begin with the raw amino-acid sequence, 358 residues long: Peptide chain release factor 1 (358 aa).

N5-methylglutamine is present on Q233.

This sequence belongs to the prokaryotic/mitochondrial release factor family. In terms of processing, methylated by PrmC. Methylation increases the termination efficiency of RF1.

The protein resides in the cytoplasm. Its function is as follows. Peptide chain release factor 1 directs the termination of translation in response to the peptide chain termination codons UAG and UAA. This chain is Peptide chain release factor 1, found in Staphylococcus haemolyticus (strain JCSC1435).